The primary structure comprises 524 residues: Sterol O-acyltransferase 2 (524 aa).

The interval 1–31 is disordered; the sequence is MEPKAPQLRRRERQGEEQENGACGEGNTRTH. At 1–118 the chain is on the cytoplasmic side; that stretch reads MEPKAPQLRR…LDELMGVQHF (118 aa). Histidine 117 is a binding site for cholesterol. A helical transmembrane segment spans residues 119-140; sequence RTIYHMFIAGLCVLIISTLAID. The Lumenal segment spans residues 141–160; it reads FIDEGRLMLEFDLLLFSFGQ. Residues 161 to 186 traverse the membrane as a helical segment; it reads LPLALMMWVPMFLSTLLLPYQTLRLW. Over 187–198 the chain is Cytoplasmic; sequence ARPRSGGAWTLG. The helical transmembrane segment at 199–222 threads the bilayer; sequence ASLGCVLLAAHAAVLCVLPVHVSV. Residues 223–230 lie on the Lumenal side of the membrane; it reads KHELPPAS. Residues 231 to 254 traverse the membrane as a helical segment; that stretch reads RCVLVFEQVRFLMKSYSFLRETVP. Residues 255 to 295 lie on the Cytoplasmic side of the membrane; it reads GIFCVRGGKGICTPSFSSYLYFLFCPTLIYRETYPRTPSIR. The residue at position 279 (cysteine 279) is a Cysteine sulfenic acid (-SOH); alternate. Residue cysteine 279 forms a Glycyl cysteine thioester (Cys-Gly) (interchain with G-Cter in ubiquitin); alternate linkage. Residues 296 to 328 form a helical membrane-spanning segment; the sequence is WNYVAKNFAQALGCLLYACFILGRLCVPVFANM. Residues 329–345 are Lumenal-facing; it reads SREPFSTRALLLSILHA. A helical transmembrane segment spans residues 346-371; it reads TGPGIFMLLLIFFAFLHCWLNAFAEM. Over 372-419 the chain is Cytoplasmic; it reads LRFGDRMFYRDWWNSTSFSNYYRTWNVVVHDWLYSYVYQDGLWLLGRQ. Positions 379–385 match the FYXDWWN motif motif; that stretch reads FYRDWWN. An acyl-CoA is bound by residues asparagine 391, arginine 394, asparagine 397, histidine 401, tyrosine 409, and serine 432. Residues 420–444 traverse the membrane as a helical segment; sequence GRGAAMLGVFLVSALVHEYIFCFVL. The active site involves histidine 436. Residues 445–450 lie on the Lumenal side of the membrane; that stretch reads GFFYPV. The helical transmembrane segment at 451 to 466 threads the bilayer; that stretch reads MLILFLVVGGLLNFTM. The Cytoplasmic portion of the chain corresponds to 467–472; the sequence is NDRHTG. The chain crosses the membrane as a helical span at residues 473-504; the sequence is PAWNILMWTFLFLGQGIQVSLYCQEWYARRHC. Topologically, residues 505 to 524 are lumenal; that stretch reads PLPQPTFWELVTPRSWSCHP.

The protein belongs to the membrane-bound acyltransferase family. Sterol o-acyltransferase subfamily. As to quaternary structure, may form homo- or heterodimers. Interacts with INSIG1; the interaction is direct and promotes association with AMFR/gp78. In terms of processing, polyubiquitinated by AMFR/gp78 at Cys-279, leading to its degradation when the lipid levels are low. Association with AMFR/gp78 is mediated via interaction with INSIG1. High concentration of cholesterol and fatty acid results in Cys-279 oxidation, preventing ubiquitination at the same site, resulting in protein stabilization. Post-translationally, oxidized at Cys-279: high concentration of cholesterol and fatty acid induce reactive oxygen species, which oxidizes Cys-279, preventing ubiquitination at the same site, and resulting in protein stabilization.

The protein localises to the endoplasmic reticulum membrane. The enzyme catalyses a sterol + a long-chain fatty acyl-CoA = a long-chain 3-hydroxysterol ester + CoA. It carries out the reaction cholesterol + an acyl-CoA = a cholesterol ester + CoA. The catalysed reaction is cholesterol + (9Z)-octadecenoyl-CoA = cholesteryl (9Z-octadecenoate) + CoA. It catalyses the reaction (5Z,8Z,11Z,14Z,17Z)-eicosapentaenoyl-CoA + cholesterol = (5Z,8Z,11Z,14Z,17Z-eicosapentaenoyl)-cholesterol + CoA. The enzyme catalyses (9Z,12Z,15Z)-octadecatrienoyl-CoA + cholesterol = (9Z,12Z,15Z-octadecatrienoyl)-cholesterol + CoA. It carries out the reaction (5Z,8Z,11Z,14Z)-eicosatetraenoyl-CoA + cholesterol = cholesteryl (5Z,8Z,11Z,14Z)-eicosatetraenoate + CoA. Catalyzes the formation of fatty acid-cholesterol esters, which are less soluble in membranes than cholesterol. Plays a role in lipoprotein assembly and dietary cholesterol absorption. Utilizes oleoyl-CoA ((9Z)-octadecenoyl-CoA) and linolenoyl-CoA ((9Z,12Z,15Z)-octadecatrienoyl-CoA) as substrates. May provide cholesteryl esters for lipoprotein secretion from hepatocytes and intestinal mucosa. The protein is Sterol O-acyltransferase 2 of Rattus norvegicus (Rat).